The following is a 404-amino-acid chain: Adenylosuccinate synthetase (404 aa).

GTP is bound by residues 12-18 (GDEGKGK) and 40-42 (GHT). D13 acts as the Proton acceptor in catalysis. Residues D13 and G40 each coordinate Mg(2+). Residues 13–16 (DEGK), 38–41 (NAGH), T121, R135, Q213, T228, and R296 each bind IMP. H41 (proton donor) is an active-site residue. 292–298 (TTTGRAR) is a substrate binding site. Residues R298, 324–326 (KMD), and 389–391 (SCG) each bind GTP.

Belongs to the adenylosuccinate synthetase family. As to quaternary structure, homodimer. The cofactor is Mg(2+).

It localises to the cytoplasm. It carries out the reaction IMP + L-aspartate + GTP = N(6)-(1,2-dicarboxyethyl)-AMP + GDP + phosphate + 2 H(+). It functions in the pathway purine metabolism; AMP biosynthesis via de novo pathway; AMP from IMP: step 1/2. Functionally, plays an important role in the de novo pathway of purine nucleotide biosynthesis. Catalyzes the first committed step in the biosynthesis of AMP from IMP. The protein is Adenylosuccinate synthetase of Deinococcus geothermalis (strain DSM 11300 / CIP 105573 / AG-3a).